Consider the following 430-residue polypeptide: Trigger factor (430 aa).

The PPIase FKBP-type domain occupies 157-242; sequence GDLVALETWS…AVEVSEPVLP (86 aa).

It belongs to the FKBP-type PPIase family. Tig subfamily.

The protein resides in the cytoplasm. The catalysed reaction is [protein]-peptidylproline (omega=180) = [protein]-peptidylproline (omega=0). In terms of biological role, involved in protein export. Acts as a chaperone by maintaining the newly synthesized protein in an open conformation. Functions as a peptidyl-prolyl cis-trans isomerase. The protein is Trigger factor of Xanthomonas axonopodis pv. citri (strain 306).